The sequence spans 813 residues: Leucine--tRNA ligase (813 aa).

Positions 42–52 (PYTSGNLHIGH) match the 'HIGH' region motif. A 'KMSKS' region motif is present at residues 580–584 (KMSKS). Lysine 583 lines the ATP pocket.

This sequence belongs to the class-I aminoacyl-tRNA synthetase family.

Its subcellular location is the cytoplasm. The enzyme catalyses tRNA(Leu) + L-leucine + ATP = L-leucyl-tRNA(Leu) + AMP + diphosphate. This is Leucine--tRNA ligase from Dehalococcoides mccartyi (strain CBDB1).